The sequence spans 314 residues: Probable cell division protein WhiA (314 aa).

A DNA-binding region (H-T-H motif) is located at residues 274–308 (SLKELGEMMSTGKISKSGVNHRLRKLNEMADKLRS).

Belongs to the WhiA family.

In terms of biological role, involved in cell division and chromosome segregation. The polypeptide is Probable cell division protein WhiA (Staphylococcus saprophyticus subsp. saprophyticus (strain ATCC 15305 / DSM 20229 / NCIMB 8711 / NCTC 7292 / S-41)).